The chain runs to 932 residues: Protein translocase subunit SecA (932 aa).

ATP contacts are provided by residues Q87, 105 to 109 (GEGKT), and D515. Zn(2+) is bound by residues C916, C918, C927, and H928.

It belongs to the SecA family. As to quaternary structure, monomer and homodimer. Part of the essential Sec protein translocation apparatus which comprises SecA, SecYEG and auxiliary proteins SecDF-YajC and YidC. Zn(2+) is required as a cofactor.

Its subcellular location is the cell inner membrane. The protein resides in the cytoplasm. The catalysed reaction is ATP + H2O + cellular proteinSide 1 = ADP + phosphate + cellular proteinSide 2.. In terms of biological role, part of the Sec protein translocase complex. Interacts with the SecYEG preprotein conducting channel. Has a central role in coupling the hydrolysis of ATP to the transfer of proteins into and across the cell membrane, serving both as a receptor for the preprotein-SecB complex and as an ATP-driven molecular motor driving the stepwise translocation of polypeptide chains across the membrane. In Burkholderia lata (strain ATCC 17760 / DSM 23089 / LMG 22485 / NCIMB 9086 / R18194 / 383), this protein is Protein translocase subunit SecA.